The primary structure comprises 200 residues: Small heat shock protein hspG2 (200 aa).

One can recognise a sHSP domain in the interval 33-200 (NKRIDIIPSM…DNFQIKLKSI (168 aa)). The disordered stretch occupies residues 86 to 139 (KLQQQQQQQSEKSSQSTNNKDDDEPSIEEYEDDTKLKSNLNKNTENKDENKTTS). A compositionally biased stretch (low complexity) spans 88 to 101 (QQQQQQQSEKSSQS). Residues 106–117 (DDDEPSIEEYED) show a composition bias toward acidic residues.

This sequence belongs to the small heat shock protein (HSP20) family.

In Dictyostelium discoideum (Social amoeba), this protein is Small heat shock protein hspG2 (hspG2).